Consider the following 284-residue polypeptide: Efem/EfeO family lipoprotein (284 aa).

A signal peptide spans 1–17 (MKKLTTLLLASTLLIAA). The N-palmitoyl cysteine moiety is linked to residue Cys18. Residue Cys18 is the site of S-diacylglycerol cysteine attachment.

This sequence belongs to the EfeM/EfeO family.

Its subcellular location is the cell membrane. This chain is Efem/EfeO family lipoprotein, found in Staphylococcus aureus (strain MRSA252).